The following is a 364-amino-acid chain: Coproporphyrin III ferrochelatase (364 aa).

The Fe-coproporphyrin III site is built by Arg29 and Tyr118. 2 residues coordinate Fe(2+): His169 and Glu250.

The protein belongs to the ferrochelatase family.

It is found in the cytoplasm. The catalysed reaction is Fe-coproporphyrin III + 2 H(+) = coproporphyrin III + Fe(2+). It functions in the pathway porphyrin-containing compound metabolism; protoheme biosynthesis. In terms of biological role, involved in coproporphyrin-dependent heme b biosynthesis. Catalyzes the insertion of ferrous iron into coproporphyrin III to form Fe-coproporphyrin III. The polypeptide is Coproporphyrin III ferrochelatase (Streptococcus pneumoniae (strain Hungary19A-6)).